Consider the following 330-residue polypeptide: Clavaminate synthase-like protein At3g21360 (330 aa).

At A2 the chain carries N-acetylalanine. Fe cation contacts are provided by H120, E122, and H313.

Requires Fe cation as cofactor.

The protein is Clavaminate synthase-like protein At3g21360 of Arabidopsis thaliana (Mouse-ear cress).